A 39-amino-acid polypeptide reads, in one-letter code: uncharacterized protein (39 aa).

The segment covering 1 to 16 has biased composition (polar residues); it reads MLNIQPTQSIVNNQPK. Positions 1–39 are disordered; it reads MLNIQPTQSIVNNQPKSDQKKQKPADLLKEFYDKTGNRN. Over residues 17–39 the composition is skewed to basic and acidic residues; it reads SDQKKQKPADLLKEFYDKTGNRN.

This is an uncharacterized protein from Dictyostelium discoideum (Social amoeba).